Reading from the N-terminus, the 115-residue chain is Protein V2 (115 aa).

It belongs to the geminiviridae protein AV2/V2 family. As to quaternary structure, interacts with host SGS3.

The protein localises to the host cytoplasm. Its subcellular location is the host perinuclear region. In terms of biological role, through its interaction with host SGS3, acts as a suppressor of RNA-mediated gene silencing, also known as post-transcriptional gene silencing (PTGS), a mechanism of plant viral defense that limits the accumulation of viral RNAs. This chain is Protein V2, found in Tomato yellow leaf curl China virus (TYLCCNV).